The following is a 328-amino-acid chain: Ketol-acid reductoisomerase (NADP(+)) (328 aa).

The KARI N-terminal Rossmann domain occupies methionine 1–threonine 179. Residues tyrosine 24 to glutamine 27, arginine 47, and serine 51 contribute to the NADP(+) site. Residue histidine 106 is part of the active site. Residue glycine 132 coordinates NADP(+). Residues threonine 180–alanine 325 enclose the KARI C-terminal knotted domain. Residues aspartate 188, glutamate 192, glutamate 224, and glutamate 228 each contribute to the Mg(2+) site. Residue serine 249 participates in substrate binding.

Belongs to the ketol-acid reductoisomerase family. Mg(2+) serves as cofactor.

The catalysed reaction is (2R)-2,3-dihydroxy-3-methylbutanoate + NADP(+) = (2S)-2-acetolactate + NADPH + H(+). The enzyme catalyses (2R,3R)-2,3-dihydroxy-3-methylpentanoate + NADP(+) = (S)-2-ethyl-2-hydroxy-3-oxobutanoate + NADPH + H(+). Its pathway is amino-acid biosynthesis; L-isoleucine biosynthesis; L-isoleucine from 2-oxobutanoate: step 2/4. It participates in amino-acid biosynthesis; L-valine biosynthesis; L-valine from pyruvate: step 2/4. Functionally, involved in the biosynthesis of branched-chain amino acids (BCAA). Catalyzes an alkyl-migration followed by a ketol-acid reduction of (S)-2-acetolactate (S2AL) to yield (R)-2,3-dihydroxy-isovalerate. In the isomerase reaction, S2AL is rearranged via a Mg-dependent methyl migration to produce 3-hydroxy-3-methyl-2-ketobutyrate (HMKB). In the reductase reaction, this 2-ketoacid undergoes a metal-dependent reduction by NADPH to yield (R)-2,3-dihydroxy-isovalerate. The chain is Ketol-acid reductoisomerase (NADP(+)) from Tremblaya princeps.